Consider the following 453-residue polypeptide: Transcription factor bHLH110 (453 aa).

Disordered regions lie at residues 1-37 (MDSANLHQLQDQLQLVGSSSSSSSLDNNSDPSCYGAS) and 177-197 (SSLPSSSSSSSPSSQSHRGNF). 2 stretches are compositionally biased toward low complexity: residues 8 to 32 (QLQDQLQLVGSSSSSSSLDNNSDPS) and 177 to 192 (SSLPSSSSSSSPSSQS). Residues 322 to 371 (VESRSSCPPFKVRKEKLGDRIAALQQLVSPFGKTDTASVLMEAIGYIKFL) form the bHLH domain. The tract at residues 386-411 (SRNRPGKASQLVSQSQEGDEEETRDL) is disordered.

Homodimer.

It is found in the nucleus. The protein is Transcription factor bHLH110 (BHLH110) of Arabidopsis thaliana (Mouse-ear cress).